The chain runs to 473 residues: MTVDTITSTSNGNQDVPKEFLPIEFETQLLHLGRFPDILGSCAVPVYSSAAFEFNSVAHGARLLNLTQFGNIYSRFTNPTVNVLQNRLAGLEGGVAACGVASGSAAVVVTVMALTGVGDNFVSSFHVHAGTFHQFDSLAKQMGIECRFVKSRDPADFAAAIDDKTKFVWLETISNPGNVILDLEAVSTVCHTKGIPLICDNTFGCAGYFCRPIDHGVDIVVHSATKWIGGHGTTVGGIIVDGGTFDWGQHPDRFPQFHDPRTRLWERFSRRAFAVRCQFEILRDTGSTLSAPAAQQLLVGLESLAVRCERHAQNAAKIADWLREYPLVAWVSYVGHPNHPDHQGALKYLKRGFGSVICFGLRGGFEAGALFCDALKMVITTTNLGDAKTLILHPASTTHEHFSSEHRAEAGVTDDMIRLSVGIEQIKDIKADFEQAFKQVLRGKKSLRKPCIGKILMQDEINEDLFGPSACRT.

Lys-226 is subject to N6-(pyridoxal phosphate)lysine.

Belongs to the trans-sulfuration enzymes family. Pyridoxal 5'-phosphate is required as a cofactor.

It participates in alkaloid biosynthesis. Sulfhydrylase-like protein; part of the gene cluster that mediates the biosynthesis of loline alkaloids, potent insecticidal agents composed of a pyrrolizidine ring system and an uncommon ether bridge linking carbons 2 and 7. Lolines are structurally differentiated by the various modifications of the L-amino group and include norloline, loline, N-methylloline, N-acetylloline, N-acetylnorloline, and N-formylloline. The first committed step is the condensation of O-acetyl-L-homoserine (derived from L-aspartic acid) and L-proline, probably catalyzed by the gamma-type pyridoxal 5'-phosphate(PLP)-dependent enzyme lolC, to give the diamino diacid, NACPP. Ensuing cyclization, decarboxylation, and acetylation steps yield 1-exo-acetamidopyrrolizidine (AcAP). LolO is required for installation of the ether bridge upon the pathway intermediate, 1-exo-acetamidopyrrolizidine (AcAP). In sequential 2-oxoglutarate- and O(2)-consuming steps, lolO removes hydrogens from C2 and C7 of AcAP to form both carbon-oxygen bonds in N-acetylnorloline (NANL), the precursor to all other lolines. The enzymes lolD, lolE, lolF and lolT have also been proposed to be involved in the ether-bridge installation. Further processing of the exocyclic moiety of NANL by fungal N-acetamidase (LolN), methyltransferase (LolM), and cytochrome P450 (LolP) enzymes, with occasional involvement of a plant acetyltransferase, generates the other known lolines. LolN transforms NANL to norlonine which is monomethylated and dimethylated to respectively lonine and N-methyllonine (NML) by lolM. LolP catalyzes hydroxylation of the methyl group in N-methylloline (NML) and further oxygenation to N-formylloline (NFL). A plant acetyltransferase is responsible for the acetylation of loline to form N-acetylloline (NAL). LolA might interact with aspartate kinase to prevent feedback inhibition of its activity by these end products and thereby promote production of L-homoserine from L-aspartate. The protein is Sulfhydrylase-like protein lolC2 of Epichloe uncinata (Endophyte fungus).